We begin with the raw amino-acid sequence, 1644 residues long: Kinesin-like protein unc-104 (1644 aa).

A Kinesin motor domain is found at 3-351 (SVKVAVRVRP…LRYADRAKQI (349 aa)). 97–104 (GQTGAGKS) lines the ATP pocket. Residues 358–436 (NEDANAKLIR…IAELNETWEE (79 aa)) adopt a coiled-coil conformation. The region spanning 499–565 (TRLGTSEANV…LQTGSRVILG (67 aa)) is the FHA domain. Over residues 574–591 (HPEQAREKREKPKDKDVG) the composition is skewed to basic and acidic residues. Residues 574–598 (HPEQAREKREKPKDKDVGENPGGNA) form a disordered region. A coiled-coil region spans residues 631–672 (EQFKREKLAADQEFEEQRKTYEARIDALQKQVEEQSMTMSMY). 2 disordered regions span residues 953–985 (EQED…LQPG) and 1419–1440 (HMVI…TLPE). A compositionally biased stretch (basic and acidic residues) spans 969-984 (ELHESNEHEPGEHLQP). The segment covering 1428–1437 (TPVKDQQTPT) has biased composition (polar residues). A PH domain is found at 1542–1640 (VVARKGYLNV…WLYAINPLLA (99 aa)).

It belongs to the TRAFAC class myosin-kinesin ATPase superfamily. Kinesin family. Unc-104 subfamily. Monomer.

Its subcellular location is the cytoplasm. It is found in the cytoskeleton. Its function is as follows. Required for presynaptic maturation, has a role in axonal transport of dense-core vesicles carrying synaptic vesicle precursors, components required for the morphological transformation of axonal growth cones to mature boutons. The protein is Kinesin-like protein unc-104 of Aedes aegypti (Yellowfever mosquito).